A 312-amino-acid chain; its full sequence is Olfactory receptor 6C2 (312 aa).

Residues 1 to 23 (MKNHTVIRTFILLGLTGDPHLQV) are Extracellular-facing. The N-linked (GlcNAc...) asparagine glycan is linked to N3. A helical transmembrane segment spans residues 24–44 (LLFIFLFLTYMLSVTGNLTII). The Cytoplasmic portion of the chain corresponds to 45–52 (TLTLVDHH). The helical transmembrane segment at 53-73 (LKTPMYFFLRNFSFLEVSFTT) threads the bilayer. The Extracellular portion of the chain corresponds to 74 to 97 (VCIPRFLYNISMGDNTITYNACAS). N82 carries an N-linked (GlcNAc...) asparagine glycan. C95 and C187 are disulfide-bonded. Residues 98–118 (QIFFVILFGATEFFLLAAMSY) form a helical membrane-spanning segment. Residues 119 to 137 (DRYVAICKPLHYVVIMNNR) lie on the Cytoplasmic side of the membrane. Residues 138–158 (VCTLLVLCCWVAGLMIIVPPL) traverse the membrane as a helical segment. Over 159 to 195 (SLGLQLEFCDSNAIDHFSCDAGPLLKISCSDTWVIEQ) the chain is Extracellular. Residues 196 to 215 (MVILMAVFALIITLVCVILS) form a helical membrane-spanning segment. Residues 216 to 235 (YLYIVRTILKFPSVQQRKKA) are Cytoplasmic-facing. Residues 236–256 (FSTCSSHMIVVSIAYGSCIFI) traverse the membrane as a helical segment. The Extracellular portion of the chain corresponds to 257–269 (YIKPSAKDEVAIN). A helical membrane pass occupies residues 270–290 (KGVSVLTTSVAPLLNPFIYTL). Residues 291–312 (RNKQVKQAFSDSIKRIAFLSKK) lie on the Cytoplasmic side of the membrane.

This sequence belongs to the G-protein coupled receptor 1 family.

It is found in the cell membrane. In terms of biological role, odorant receptor. In Homo sapiens (Human), this protein is Olfactory receptor 6C2 (OR6C2).